The chain runs to 328 residues: Naphthalene 1,2-dioxygenase/salicylate 5-hydroxylase systems, ferredoxin--NAD(P)(+), reductase component (328 aa).

The 2Fe-2S ferredoxin-type domain occupies 1-89 (MELVVEPLNL…DCTIEIPESD (89 aa)). Cysteine 35, cysteine 40, cysteine 43, and cysteine 73 together coordinate [2Fe-2S] cluster. In terms of domain architecture, FAD-binding FR-type spans 96-193 (ARIVKGTVTA…SGPLGTAYLR (98 aa)).

This sequence belongs to the bacterial ring-hydroxylating dioxygenase ferredoxin reductase family. In terms of assembly, ferredoxin reductase NagAa belongs to both the salicylate 5-hydroxylase (S5H) and the naphthalene 1,2-dioxygenase (NDO) multicomponent enzyme systems. The NDO multicomponent enzyme system is composed of an electron transfer component and a dioxygenase component (iron sulfur protein (ISP)). The electron transfer component is composed of a ferredoxin reductase (NagAa) and a ferredoxin (NagAb), and the dioxygenase component is formed by a large alpha subunit (NagAc) and a small beta subunit (NagAd). The S5H multicomponent enzyme system is composed of an electron transfer component and a monooxygenase component. The electron transfer component is comprised of a ferredoxin reductase (NagAa) and a ferredoxin (NagAb), and the monooxygenase component is formed by a large subunit (NagG) and a small subunit (NagH). [2Fe-2S] cluster serves as cofactor. The cofactor is FAD.

It catalyses the reaction 2 reduced [2Fe-2S]-[ferredoxin] + NAD(+) + H(+) = 2 oxidized [2Fe-2S]-[ferredoxin] + NADH. It carries out the reaction 2 reduced [2Fe-2S]-[ferredoxin] + NADP(+) + H(+) = 2 oxidized [2Fe-2S]-[ferredoxin] + NADPH. It functions in the pathway aromatic compound metabolism; naphthalene degradation. In terms of biological role, component of two multicomponent enzyme systems which are involved in the catabolism of naphthalene. Plays a role as an electron transfer component for both salicylate 5-hydroxylase (S5H) and naphthalene 1,2-dioxygenase (NDO) systems, by transferring electrons from NAD(P)H to the oxygenase component via the ferredoxin NagAb. The electron transport chain from the two systems can use both NADH and NADPH as electron donors at approximately similar rates. This chain is Naphthalene 1,2-dioxygenase/salicylate 5-hydroxylase systems, ferredoxin--NAD(P)(+), reductase component, found in Ralstonia sp.